The chain runs to 160 residues: Ribosomal RNA large subunit methyltransferase H (160 aa).

Residues leucine 76, glycine 108, and 127–132 contribute to the S-adenosyl-L-methionine site; that span reads LGKMTW.

This sequence belongs to the RNA methyltransferase RlmH family. As to quaternary structure, homodimer.

The protein localises to the cytoplasm. The catalysed reaction is pseudouridine(1915) in 23S rRNA + S-adenosyl-L-methionine = N(3)-methylpseudouridine(1915) in 23S rRNA + S-adenosyl-L-homocysteine + H(+). Functionally, specifically methylates the pseudouridine at position 1915 (m3Psi1915) in 23S rRNA. The sequence is that of Ribosomal RNA large subunit methyltransferase H from Rhizobium johnstonii (strain DSM 114642 / LMG 32736 / 3841) (Rhizobium leguminosarum bv. viciae).